The chain runs to 85 residues: Putative membrane protein insertion efficiency factor (85 aa).

The protein belongs to the UPF0161 family.

Its subcellular location is the cell membrane. In terms of biological role, could be involved in insertion of integral membrane proteins into the membrane. In Buchnera aphidicola subsp. Baizongia pistaciae (strain Bp), this protein is Putative membrane protein insertion efficiency factor.